The chain runs to 136 residues: Protein K5 (136 aa).

This sequence belongs to the poxviridae K5 protein family.

The chain is Protein K5 from Homo sapiens (Human).